A 967-amino-acid chain; its full sequence is MDDIPTLLARTLNPTTSKSAEEALKVWELQDSSFALKLLNIVAEDTVDINIKLAASLYFKNYIKKHWDSEEGASIRISDEVAELIKREIINLMLKSTTIIQVQLGEVIGYIANFDFPDRWDTLLPDLISKLSAVDMNTNIAVLSTAHAIFKRWRPLFRSDALFLEIKYVLDRFCEPFLALFVQTNNLLRNGPQDAESLNSLFQVILLECKLFYDLNCQDIPEFFEDHMSEFMTAFLNYFTYTNPSLEGDEGETNVLIKVKASICEIVELYTLRYEEVFTMLYDFVNVTWTLLTTLTPDEKYDGLVGKAMAFLTSVIRIRKHAEFFQQDQVLQQFIELVVLPNICLRESDEELFEDDPLEYVRRDLEGSNSDSRARSAIVLVRGLLDHFDQKITSVVSTHINANLQQFSTNPSLEWNKKYVALQLFSAIAIKGQSTRLGVTSINLMVDVVAFFENNIKPDLLQPAGVIHPMVLAEDIKYVFTFRNQLNSQQLIDIFPTILRFLEMPSFVVYTYAAIALDQLLTVRHNHVHIFTSLLIAPHILPALNQLFLIVESASTPQKLAENDYLMKAVMRIIIMSQEAILPAASLLLQHLTKITEEVSKNPSNPKFNHYLFESIGALIRSLSKSGPQTVSQLENALLPVFQNVLIEDVTEFIPYVLQLLSQLVEASGNEPLPDFVVNLIQPCLSPALWDSKGNIPALVRLLRAMIFRGPQIFISNKFVEPVLGIFQKLISSKVNDHFGFDLLDRVFTVFNANILAPYINHIFFLLLSRLKNSRTERFVLRCTIFFFFVASEQTGTCGPDNLIQGVDAVQSGVFGQLMTSIILPQAQKLALPLDRKISALGLLRLLTCDLVLAPDAIYENLIIPLLTCILKLFEMPIEQAQTDADEELFMDEIDADSMSFQASFSRLATTGGKRVDPFPQITDLKQYCATEMNLANRNMGGRLSQIISTHLPGDGQSVLQSYGYVI.

The Importin N-terminal domain maps to 20-95 (AEEALKVWEL…KREIINLMLK (76 aa)).

Belongs to the XPO2/CSE1 family. In terms of assembly, binds with high affinity to importin-alpha only in the presence of RanGTP.

The protein localises to the cytoplasm. Its subcellular location is the nucleus envelope. In terms of biological role, export receptor for importin alpha. Mediates importin-alpha re-export from the nucleus to the cytoplasm after import substrates have been released into the nucleoplasm. This chain is Importin-alpha re-exporter (kap109), found in Schizosaccharomyces pombe (strain 972 / ATCC 24843) (Fission yeast).